We begin with the raw amino-acid sequence, 500 residues long: Cytochrome P450 81F1 (500 aa).

The helical transmembrane segment at 1–21 threads the bilayer; it reads MLYFILLPLLFLVISYKFLYS. A Glycyl lysine isopeptide (Lys-Gly) (interchain with G-Cter in ubiquitin) cross-link involves residue lysine 248. Cysteine 438 provides a ligand contact to heme.

Belongs to the cytochrome P450 family. The cofactor is heme.

It is found in the membrane. It participates in secondary metabolite biosynthesis. Involved in indole glucosinolate biosynthesis. Catalyzes hydroxylation reactions of the glucosinolate indole ring. Converts indol-3-yl-methylglucosinolate (I3M) to 4-hydroxy-indol-3-yl-methylglucosinolate (4OH-I3M) and/or 1-hydroxy-indol-3-yl-methylglucosinolate (1OH-I3M) intermediates. These hydroxy intermediates are converted to 4-methoxy-indol-3-yl-methylglucosinolate (4MO-I3M) and 1-methoxy-indol-3-yl-methylglucosinolate (1MO-I3M) by indole glucosinolate methyltransferase 1 and 2 (IGMT1 and IGMT2). This chain is Cytochrome P450 81F1, found in Arabidopsis thaliana (Mouse-ear cress).